The primary structure comprises 273 residues: ComE operon protein 4 (273 aa).

It belongs to the pyrroline-5-carboxylate reductase family.

Its function is as follows. Dispensable for transformability. Not known if it can act as a pyrroline-5-carboxylate reductase. The polypeptide is ComE operon protein 4 (comER) (Bacillus subtilis (strain 168)).